The sequence spans 256 residues: Pimeloyl-[acyl-carrier protein] methyl ester esterase (256 aa).

Residues 15–242 (HLVLLHGWGL…AAHAPFISHP (228 aa)) enclose the AB hydrolase-1 domain. Residues W22, 82–83 (SL), and 143–147 (FLALQ) contribute to the substrate site. The Nucleophile role is filled by S82. Residues D207 and H235 contribute to the active site. H235 is a substrate binding site.

The protein belongs to the AB hydrolase superfamily. Carboxylesterase BioH family. Monomer.

The protein localises to the cytoplasm. The enzyme catalyses 6-carboxyhexanoyl-[ACP] methyl ester + H2O = 6-carboxyhexanoyl-[ACP] + methanol + H(+). It functions in the pathway cofactor biosynthesis; biotin biosynthesis. Functionally, the physiological role of BioH is to remove the methyl group introduced by BioC when the pimeloyl moiety is complete. It allows to synthesize pimeloyl-ACP via the fatty acid synthetic pathway through the hydrolysis of the ester bonds of pimeloyl-ACP esters. The polypeptide is Pimeloyl-[acyl-carrier protein] methyl ester esterase (Escherichia fergusonii (strain ATCC 35469 / DSM 13698 / CCUG 18766 / IAM 14443 / JCM 21226 / LMG 7866 / NBRC 102419 / NCTC 12128 / CDC 0568-73)).